We begin with the raw amino-acid sequence, 819 residues long: Leucine--tRNA ligase (819 aa).

The short motif at 40–51 is the 'HIGH' region element; sequence PYPSGAGLHVGH. Positions 600 to 604 match the 'KMSKS' region motif; sequence KMSKS. Lysine 603 serves as a coordination point for ATP.

It belongs to the class-I aminoacyl-tRNA synthetase family.

It localises to the cytoplasm. The catalysed reaction is tRNA(Leu) + L-leucine + ATP = L-leucyl-tRNA(Leu) + AMP + diphosphate. This Chlamydia trachomatis serovar L2 (strain ATCC VR-902B / DSM 19102 / 434/Bu) protein is Leucine--tRNA ligase.